We begin with the raw amino-acid sequence, 599 residues long: Elongation factor 4 (599 aa).

One can recognise a tr-type G domain in the interval 2–184 (KNIRNFSIIA…RLVRDIPPPE (183 aa)). Residues 14–19 (DHGKST) and 131–134 (NKID) contribute to the GTP site.

It belongs to the TRAFAC class translation factor GTPase superfamily. Classic translation factor GTPase family. LepA subfamily.

Its subcellular location is the cell inner membrane. The catalysed reaction is GTP + H2O = GDP + phosphate + H(+). Its function is as follows. Required for accurate and efficient protein synthesis under certain stress conditions. May act as a fidelity factor of the translation reaction, by catalyzing a one-codon backward translocation of tRNAs on improperly translocated ribosomes. Back-translocation proceeds from a post-translocation (POST) complex to a pre-translocation (PRE) complex, thus giving elongation factor G a second chance to translocate the tRNAs correctly. Binds to ribosomes in a GTP-dependent manner. This is Elongation factor 4 from Escherichia coli O8 (strain IAI1).